The chain runs to 386 residues: Chaperone protein DnaJ (386 aa).

Residues 4–68 (NFYDVLGVSR…QKRQQYDQLG (65 aa)) enclose the J domain. 2 stretches are compositionally biased toward basic and acidic residues: residues 22–35 (KAYR…HPDV) and 43–79 (ERFK…DKRG). The interval 22–132 (KAYRKQAAEH…GGNRPRQGQD (111 aa)) is disordered. Gly residues-rich tracts occupy residues 80-104 (ATGG…GAGG) and 113-125 (FGGG…GGGN). Residues 147 to 229 (GATKEVTLTR…CGGDGVVREE (83 aa)) form a CR-type zinc finger. Residues Cys-160, Cys-163, Cys-177, Cys-180, Cys-203, Cys-206, Cys-217, and Cys-220 each coordinate Zn(2+). CXXCXGXG motif repeat units lie at residues 160 to 167 (CDTCDGAG), 177 to 184 (CSQCNGRG), 203 to 210 (CPRCEGSG), and 217 to 224 (CADCGGDG).

Belongs to the DnaJ family. As to quaternary structure, homodimer. It depends on Zn(2+) as a cofactor.

It localises to the cytoplasm. Participates actively in the response to hyperosmotic and heat shock by preventing the aggregation of stress-denatured proteins and by disaggregating proteins, also in an autonomous, DnaK-independent fashion. Unfolded proteins bind initially to DnaJ; upon interaction with the DnaJ-bound protein, DnaK hydrolyzes its bound ATP, resulting in the formation of a stable complex. GrpE releases ADP from DnaK; ATP binding to DnaK triggers the release of the substrate protein, thus completing the reaction cycle. Several rounds of ATP-dependent interactions between DnaJ, DnaK and GrpE are required for fully efficient folding. Also involved, together with DnaK and GrpE, in the DNA replication of plasmids through activation of initiation proteins. The polypeptide is Chaperone protein DnaJ (Halorubrum lacusprofundi (strain ATCC 49239 / DSM 5036 / JCM 8891 / ACAM 34)).